The sequence spans 253 residues: Major prion protein (253 aa).

A signal peptide spans 1–22; sequence MANLGCWMLVLFVATWSDLGLC. The interaction with GRB2, ERI3 and SYN1 stretch occupies residues 23–230; that stretch reads KKRPKPGGWN…ESQAYYQRGS (208 aa). The disordered stretch occupies residues 26 to 108; that stretch reads PKPGGWNTGG…WNKPSKPKTN (83 aa). A run of 5 repeats spans residues 51 to 59, 60 to 67, 68 to 75, 76 to 83, and 84 to 91. Positions 51–91 are 5 X 8 AA tandem repeats of P-H-G-G-G-W-G-Q; sequence PQGGGGWGQPHGGGWGQPHGGGWGQPHGGGWGQPHGGGWGQ. A compositionally biased stretch (gly residues) spans 52–95; it reads QGGGGWGQPHGGGWGQPHGGGWGQPHGGGWGQPHGGGWGQGGGT. Cu(2+) is bound by residues His61, Gly62, Gly63, His69, Gly70, Gly71, His77, Gly78, Gly79, His85, Gly86, and Gly87. A disulfide bond links Cys179 and Cys214. N-linked (GlcNAc...) asparagine glycans are attached at residues Asn181 and Asn197. The GPI-anchor amidated serine moiety is linked to residue Ser230. Positions 231–253 are cleaved as a propeptide — removed in mature form; it reads SMVLFSSPPVILLISFLIFLIVG.

This sequence belongs to the prion family. Monomer and homodimer. Has a tendency to aggregate into amyloid fibrils containing a cross-beta spine, formed by a steric zipper of superposed beta-strands. Soluble oligomers may represent an intermediate stage on the path to fibril formation. Copper binding may promote oligomerization. Interacts with GRB2, APP, ERI3/PRNPIP and SYN1. Mislocalized cytosolically exposed PrP interacts with MGRN1; this interaction alters MGRN1 subcellular location and causes lysosomal enlargement. Interacts with KIAA1191.

Its subcellular location is the cell membrane. It is found in the golgi apparatus. Its primary physiological function is unclear. Has cytoprotective activity against internal or environmental stresses. May play a role in neuronal development and synaptic plasticity. May be required for neuronal myelin sheath maintenance. May play a role in iron uptake and iron homeostasis. Soluble oligomers are toxic to cultured neuroblastoma cells and induce apoptosis (in vitro). Association with GPC1 (via its heparan sulfate chains) targets PRNP to lipid rafts. Also provides Cu(2+) or Zn(2+) for the ascorbate-mediated GPC1 deaminase degradation of its heparan sulfate side chains. The protein is Major prion protein (PRNP) of Hylobates lar (Lar gibbon).